The sequence spans 358 residues: Endoplasmic reticulum junction formation protein lunapark-B (358 aa).

Residues 1–45 (MGAIISRWKTKLTTVEQLENIDKEIKQLEEFRAKNQRLQKLWVGR) are Cytoplasmic-facing. A coiled-coil region spans residues 9 to 41 (KTKLTTVEQLENIDKEIKQLEEFRAKNQRLQKL). Residues 46–66 (LLLYSSALYLLISLFVYLLYL) traverse the membrane as a helical segment. Residues 67–69 (PEQ) are Lumenal-facing. The helical transmembrane segment at 70-90 (WLLRLAMALPFFIYPVLVWFI) threads the bilayer. The Cytoplasmic segment spans residues 91–358 (RRFLIFLFSK…SRGMDKHGRA (268 aa)). Positions 99–128 (SKRSERNNDKLEDLKATKKKILEEVMETET) form a coiled coil. Residues 275 to 300 (CQQCFSHNGMALKEEFEYLAFRCAYC) form a C4-type; plays a role in ER morphology zinc finger. Residues 320–358 (NFEKRLRAESSTPGPAPHSATDTEESAPPSRGMDKHGRA) form a disordered region.

Belongs to the lunapark family. In terms of assembly, homodimer; homodimerization requires the C4-type zinc finger motif and decreases during mitosis in a phosphorylation-dependent manner. Post-translationally, phosphorylated. Phosphorylation occurs during interphase. Phosphorylation also occurs during mitosis; these phosphorylations reduce both its homodimerization and the ER three-way tubular junction formation.

The protein resides in the endoplasmic reticulum membrane. In terms of biological role, endoplasmic reticulum (ER)-shaping membrane protein that plays a role in determining ER morphology. Involved in the stabilization of nascent three-way ER tubular junctions within the ER network. May also play a role as a curvature-stabilizing protein within three-way ER tubular junction network. In Takifugu rubripes (Japanese pufferfish), this protein is Endoplasmic reticulum junction formation protein lunapark-B (lnpkb).